The sequence spans 144 residues: MAVSMQVDIVSAEGSLFSGKADMVFAQAADGEVGILPKHTQLLTQLKPGQVRVVSGDEEDSFFINSGVLEVQPSVVTILADTAIRAEDLDQAAAEEAKRRAEDAMEQAKSDTDIARAQIELAEAVAQIQTITKLRDRLHKTGLS.

The protein belongs to the ATPase epsilon chain family. As to quaternary structure, F-type ATPases have 2 components, CF(1) - the catalytic core - and CF(0) - the membrane proton channel. CF(1) has five subunits: alpha(3), beta(3), gamma(1), delta(1), epsilon(1). CF(0) has three main subunits: a, b and c.

It localises to the cell inner membrane. In terms of biological role, produces ATP from ADP in the presence of a proton gradient across the membrane. In Hydrogenovibrio crunogenus (strain DSM 25203 / XCL-2) (Thiomicrospira crunogena), this protein is ATP synthase epsilon chain.